The sequence spans 650 residues: Acetyl-coenzyme A synthetase (650 aa).

CoA-binding positions include 191–194 (RGGR), Thr-311, and Asn-335. ATP contacts are provided by residues 387-389 (GEP), 411-416 (DTWWQT), Asp-500, and Arg-515. Ser-523 contacts CoA. An ATP-binding site is contributed by Arg-526. Mg(2+) contacts are provided by Val-537, His-539, and Val-542. CoA is bound at residue Arg-584. Lys-609 carries the post-translational modification N6-acetyllysine.

It belongs to the ATP-dependent AMP-binding enzyme family. The cofactor is Mg(2+). Post-translationally, acetylated. Deacetylation by the SIR2-homolog deacetylase activates the enzyme.

It carries out the reaction acetate + ATP + CoA = acetyl-CoA + AMP + diphosphate. Functionally, catalyzes the conversion of acetate into acetyl-CoA (AcCoA), an essential intermediate at the junction of anabolic and catabolic pathways. AcsA undergoes a two-step reaction. In the first half reaction, AcsA combines acetate with ATP to form acetyl-adenylate (AcAMP) intermediate. In the second half reaction, it can then transfer the acetyl group from AcAMP to the sulfhydryl group of CoA, forming the product AcCoA. In Shewanella sp. (strain ANA-3), this protein is Acetyl-coenzyme A synthetase.